A 463-amino-acid polypeptide reads, in one-letter code: Fumarate hydratase class II (463 aa).

Residues 98-100, 129-132, 139-141, and Thr187 contribute to the substrate site; these read SGT, HPND, and SSN. The Proton donor/acceptor role is filled by His188. Ser318 is a catalytic residue. Residues Ser319 and 324-326 each bind substrate; that span reads KVN.

Belongs to the class-II fumarase/aspartase family. Fumarase subfamily. In terms of assembly, homotetramer.

The protein localises to the cytoplasm. It carries out the reaction (S)-malate = fumarate + H2O. It participates in carbohydrate metabolism; tricarboxylic acid cycle; (S)-malate from fumarate: step 1/1. Its function is as follows. Involved in the TCA cycle. Catalyzes the stereospecific interconversion of fumarate to L-malate. The chain is Fumarate hydratase class II from Rickettsia bellii (strain RML369-C).